The primary structure comprises 869 residues: Iron-sulfur cluster assembly SufBD family protein ML0593 (869 aa).

The 134-residue stretch at 344–477 (LLGLWLGDGH…VRQLAIGCGL (134 aa)) folds into the DOD-type homing endonuclease domain.

The protein belongs to the iron-sulfur cluster assembly SufBD family. This protein undergoes a protein self splicing that involves a post-translational excision of the intervening region (intein) followed by peptide ligation.

This chain is Iron-sulfur cluster assembly SufBD family protein ML0593, found in Mycobacterium leprae (strain TN).